The chain runs to 445 residues: GTPase Der (445 aa).

2 consecutive EngA-type G domains span residues 2–166 (FRVA…PEYE) and 182–355 (IKVA…NQAW). GTP is bound by residues 8-15 (GIPNVGKS), 55-59 (DTGGY), 118-121 (NKID), 188-195 (GKPNAGKS), 235-239 (DTAGM), and 300-303 (NKID). The KH-like domain maps to 356 to 440 (KRVGTGQLNR…PIKLIFRGKE (85 aa)).

It belongs to the TRAFAC class TrmE-Era-EngA-EngB-Septin-like GTPase superfamily. EngA (Der) GTPase family. In terms of assembly, associates with the 50S ribosomal subunit.

Functionally, GTPase that plays an essential role in the late steps of ribosome biogenesis. The sequence is that of GTPase Der from Sulfurihydrogenibium sp. (strain YO3AOP1).